The sequence spans 537 residues: Chaperonin GroEL 2 (537 aa).

Residues 29 to 32 (TLGP), 86 to 90 (DGTTT), Gly-413, 477 to 479 (NAA), and Asp-493 each bind ATP.

It belongs to the chaperonin (HSP60) family. Forms a cylinder of 14 subunits composed of two heptameric rings stacked back-to-back. Interacts with the co-chaperonin GroES.

It is found in the cytoplasm. It catalyses the reaction ATP + H2O + a folded polypeptide = ADP + phosphate + an unfolded polypeptide.. In terms of biological role, together with its co-chaperonin GroES, plays an essential role in assisting protein folding. The GroEL-GroES system forms a nano-cage that allows encapsulation of the non-native substrate proteins and provides a physical environment optimized to promote and accelerate protein folding. The chain is Chaperonin GroEL 2 from Thermobifida fusca (strain YX).